Consider the following 149-residue polypeptide: Histone H3-like 1 (149 aa).

The segment covering Met1 to Ala19 has biased composition (basic and acidic residues). Residues Met1–Thr58 form a disordered region. Residues Arg33–Pro44 show a composition bias toward low complexity.

Belongs to the histone H3 family. As to quaternary structure, the nucleosome is a histone octamer containing two molecules each of H2A, H2B, H3 and H4 assembled in one H3-H4 heterotetramer and two H2A-H2B heterodimers. The octamer wraps approximately 147 bp of DNA. As to expression, pollen specific.

Its subcellular location is the nucleus. It localises to the chromosome. Its function is as follows. Core component of nucleosome. Nucleosomes wrap and compact DNA into chromatin, limiting DNA accessibility to the cellular machineries which require DNA as a template. Histones thereby play a central role in transcription regulation, DNA repair, DNA replication and chromosomal stability. DNA accessibility is regulated via a complex set of post-translational modifications of histones, also called histone code, and nucleosome remodeling. In Lilium longiflorum (Trumpet lily), this protein is Histone H3-like 1 (gH3).